Here is a 1012-residue protein sequence, read N- to C-terminus: ATP-dependent DNA helicase MPH1 (1012 aa).

In terms of domain architecture, Helicase ATP-binding spans 94–261 (IVQKSLYQNT…EVVNNLNISN (168 aa)). ATP is bound at residue 107-114 (IPTGMGKT). A DEAH box motif is present at residues 209 to 212 (DEAH). Residues 430–654 (KLQKIINELS…NFVEYKKSDR (225 aa)) enclose the Helicase C-terminal domain. Positions 493–555 (DEGFIRKNKP…AQISGMNQKQ (63 aa)) are disordered. The span at 498–510 (RKNKPKGRKKADR) shows a compositional bias: basic residues. The segment covering 511-537 (LKRLEEDKQKQLSKAKQKEQEKVERSS) has biased composition (basic and acidic residues).

The protein belongs to the DEAD box helicase family. DEAH subfamily. FANCM sub-subfamily. In terms of assembly, interacts with the MHF histone-fold complex to form the FANCM-MHF complex.

The protein localises to the nucleus. The catalysed reaction is ATP + H2O = ADP + phosphate + H(+). ATP-dependent DNA helicase involved in DNA damage repair by homologous recombination and in genome maintenance. Capable of unwinding D-loops. Plays a role in limiting crossover recombinants during mitotic DNA double-strand break (DSB) repair. Component of a FANCM-MHF complex which promotes gene conversion at blocked replication forks, probably by reversal of the stalled fork. The polypeptide is ATP-dependent DNA helicase MPH1 (Vanderwaltozyma polyspora (strain ATCC 22028 / DSM 70294 / BCRC 21397 / CBS 2163 / NBRC 10782 / NRRL Y-8283 / UCD 57-17) (Kluyveromyces polysporus)).